The primary structure comprises 893 residues: Pentatricopeptide repeat-containing protein At5g52850, chloroplastic (893 aa).

PPR repeat units follow at residues 57–87 (NLDL…MSHR), 88–122 (TVFA…GTHP), 123–157 (NEFT…GFEG), 158–188 (NSVV…LQNA), 189–223 (DTIS…GVPP), 224–257 (NEFT…GIPL), 258–288 (NVVL…SGEQ), 289–323 (DVFL…GLQP), 324–358 (NNFT…GFED), 359–390 (STDV…MVSP), 391–425 (NVVS…EVEP), 426–460 (NVVT…HVDG), 461–491 (EMVV…MKRR), 492–526 (DNIT…GIRM), 527–561 (DQLS…GFSG), 562–592 (AASV…IATP), 593–627 (DVVS…ETEP), 628–658 (DSVT…MKKI), and 664–694 (QVEH…MHLK). The interval 699-774 (IFKTLLRACR…KLGKSTVEVQ (76 aa)) is type E motif. Residues 775–806 (GKVHSFVSEDVTRVDKTNGIYAEIESIKEEIK) form a type E(+) motif region. The tract at residues 807–893 (RFGSPYRGNE…SCKREETSFV (87 aa)) is type DYW motif.

The protein belongs to the PPR family. PCMP-H subfamily.

Its subcellular location is the plastid. It localises to the chloroplast. This is Pentatricopeptide repeat-containing protein At5g52850, chloroplastic (PCMP-H31) from Arabidopsis thaliana (Mouse-ear cress).